The following is an 872-amino-acid chain: MKELSSAQIRQMWLDFWKSKGHCVEPSANLVPVNDPTLLWINSGVATLKKYFDGSVIPENPRITNAQKSIRTNDIENVGKTARHHTMFEMLGNFSIGDYFRDEAIEWGFELLTSPEWFDFPKDKLYMTYYPDDKDSYNRWIACGVEPSHLVPIEDNFWEIGAGPSGPDTEIFFDRGEDFDPENIGLRLLAEDIENDRYIEIWNIVLSQFNADPAVPRSEYKELPNKNIDTGAGLERLAAVMQGAKTNFETDLFMPIIREVEKLSGKTYDPDGDNMSFKVIADHIRALSFAIGDGALPGNEGRGYVLRRLLRRAVMHGRRLGINETFLYKLVPTVGQIMESYYPEVLEKRDFIEKIVKREEETFARTIDAGSGHLDSLLAQLKAEGKDTLEGKDIFKLYDTYGFPVELIEELAEDAGYKIDHEGFKSAMKEQQDRARAAVVKGGSMGMQNETLAGIVEESRFEYDTYSLESSLSVIIADNERTEAVSEGQALLVFAQTPFYAEMGGQVADTGRIKNDKGDTVAEVVDVQKAPNGQPLHTVNVLASLSVGTNYTLEINKERRLAVEKNHTATHLLHAALHNVIGEHATQAGSLNEEEFLRFDFTHFEAVSNEELRHIEQEVNEQIWNALTITTTETDVETAKEMGAMALFGEKYGKVVRVVQIGNYSVELCGGTHLNNSSEIGLFKIVKEEGIGSGTRRIIAVTGRQAFEAYRNQEDALKEIAATVKAPQLKDAAAKVQALSDSLRDLQKENAELKEKAAAAAAGDVFKDVQEAKGVRFIASQVDVADAGALRTFADNWKQKDYSDVLVLVAAIGEKVNVLVASKTKDVHAGNMIKELAPIVAGRGGGKPDMAMAGGSDASKIAELLAAVAETV.

4 residues coordinate Zn(2+): His567, His571, Cys669, and His673.

Belongs to the class-II aminoacyl-tRNA synthetase family. The cofactor is Zn(2+).

Its subcellular location is the cytoplasm. It catalyses the reaction tRNA(Ala) + L-alanine + ATP = L-alanyl-tRNA(Ala) + AMP + diphosphate. In terms of biological role, catalyzes the attachment of alanine to tRNA(Ala) in a two-step reaction: alanine is first activated by ATP to form Ala-AMP and then transferred to the acceptor end of tRNA(Ala). Also edits incorrectly charged Ser-tRNA(Ala) and Gly-tRNA(Ala) via its editing domain. This Streptococcus pyogenes serotype M6 (strain ATCC BAA-946 / MGAS10394) protein is Alanine--tRNA ligase.